The following is a 194-amino-acid chain: dCTP deaminase (194 aa).

Residues 110–115 (RSSLAR), D128, 136–138 (VLE), Y171, K178, and Q182 contribute to the dCTP site. E138 acts as the Proton donor/acceptor in catalysis. The tract at residues 174-194 (RKSSKYKDQQEAVASRISQDK) is disordered.

It belongs to the dCTP deaminase family. In terms of assembly, homotrimer.

The catalysed reaction is dCTP + H2O + H(+) = dUTP + NH4(+). It functions in the pathway pyrimidine metabolism; dUMP biosynthesis; dUMP from dCTP (dUTP route): step 1/2. Its function is as follows. Catalyzes the deamination of dCTP to dUTP. The polypeptide is dCTP deaminase (Shewanella frigidimarina (strain NCIMB 400)).